Here is a 439-residue protein sequence, read N- to C-terminus: GTPase Der (439 aa).

EngA-type G domains are found at residues 2–168 (ATVL…EEKG) and 181–357 (IKVA…ASYT). GTP-binding positions include 8-15 (GKPNVGKS), 55-59 (DTCGV), 118-121 (NKAE), 187-194 (GRPNVGKS), 234-238 (DTAGL), and 300-303 (NKWD). In terms of domain architecture, KH-like spans 358 to 439 (TKVPSSAINS…PIFLKFKRSR (82 aa)).

It belongs to the TRAFAC class TrmE-Era-EngA-EngB-Septin-like GTPase superfamily. EngA (Der) GTPase family. As to quaternary structure, associates with the 50S ribosomal subunit.

GTPase that plays an essential role in the late steps of ribosome biogenesis. The protein is GTPase Der of Thermotoga sp. (strain RQ2).